A 401-amino-acid polypeptide reads, in one-letter code: O-methyltransferase SAT18 (401 aa).

S-adenosyl-L-methionine is bound at residue Asp249. The active-site Proton acceptor is His300.

It belongs to the class I-like SAM-binding methyltransferase superfamily. Cation-independent O-methyltransferase family.

It participates in mycotoxin biosynthesis. Its function is as follows. O-methyltransferase; part of the satratoxin SC3 cluster involved in the biosynthesis of satratoxins, trichothecene mycotoxins that are associated with human food poisonings. Satratoxins are suggested to be made by products of multiple gene clusters (SC1, SC2 and SC3) that encode 21 proteins in all, including polyketide synthases, acetyltransferases, and other enzymes expected to modify the trichothecene skeleton. SC1 encodes 10 proteins, SAT1 to SAT10. The largest are SAT8, which encodes a putative polyketide synthase (PKS) with a conventional non-reducing architecture, and SAT10, a putative protein containing four ankyrin repeats and thus may be involved in protein scaffolding. The putative short-chain reductase SAT3 may assist the PKS in some capacity. SAT6 contains a secretory lipase domain and acts probably as a trichothecene esterase. SAT5 encodes a putative acetyltransferase, and so, with SAT6, may affect endogenous protection from toxicity. The probable transcription factor SAT9 may regulate the expression of the SC1 cluster. SC2 encodes proteins SAT11 to SAT16, the largest of which encodes the putative reducing PKS SAT13. SAT11 is a cytochrome P450 monooxygenase, while SAT14 and SAT16 are probable acetyltransferases. The SC2 cluster may be regulated by the transcription factor SAT15. SC3 is a small cluster that encodes 5 proteins, SAT17 to SAT21. SAT21 is a putative MFS-type transporter which may have a role in exporting secondary metabolites. The four other proteins putatively encoded in SC3 include the taurine hydroxylase-like protein SAT17, the O-methyltransferase SAT18, the acetyltransferase SAT19, and the Cys6-type zinc finger SAT20, the latter being probably involved in regulation of SC3 expression. In Stachybotrys chartarum (strain CBS 109288 / IBT 7711) (Toxic black mold), this protein is O-methyltransferase SAT18.